A 170-amino-acid chain; its full sequence is Adenine phosphoribosyltransferase (170 aa).

It belongs to the purine/pyrimidine phosphoribosyltransferase family. Homodimer.

The protein resides in the cytoplasm. It carries out the reaction AMP + diphosphate = 5-phospho-alpha-D-ribose 1-diphosphate + adenine. The protein operates within purine metabolism; AMP biosynthesis via salvage pathway; AMP from adenine: step 1/1. Its function is as follows. Catalyzes a salvage reaction resulting in the formation of AMP, that is energically less costly than de novo synthesis. This Streptococcus pneumoniae (strain Hungary19A-6) protein is Adenine phosphoribosyltransferase.